The chain runs to 90 residues: MTFSTSSSFSRRALVALLVCTLLIDLSSFTDARPQDDPTSVAEAIRLLQELETKHAQHARPRFGKRSYLNPAGYGQDEQEDDWQDSTFTR.

The N-terminal stretch at 1–27 (MTFSTSSSFSRRALVALLVCTLLIDLS) is a signal peptide. Residues 54-90 (KHAQHARPRFGKRSYLNPAGYGQDEQEDDWQDSTFTR) are disordered. The segment covering 56-65 (AQHARPRFGK) has biased composition (basic residues). A Phenylalanine amide modification is found at Phe63. The propeptide occupies 67–90 (SYLNPAGYGQDEQEDDWQDSTFTR).

It belongs to the NPY family. As to expression, expressed in hemolymph, brain and midgut.

The protein localises to the secreted. An integral part of the sensory system that mediates food signaling, providing the neural basis for the regulation of food response; coordinates larval foraging and social behavior changes during development. May have a hormonal role in females. This is Neuropeptide F (npf) from Aedes aegypti (Yellowfever mosquito).